Here is a 197-residue protein sequence, read N- to C-terminus: Large ribosomal subunit protein bL25 (197 aa).

Belongs to the bacterial ribosomal protein bL25 family. CTC subfamily. As to quaternary structure, part of the 50S ribosomal subunit; part of the 5S rRNA/L5/L18/L25 subcomplex. Contacts the 5S rRNA. Binds to the 5S rRNA independently of L5 and L18.

Its function is as follows. This is one of the proteins that binds to the 5S RNA in the ribosome where it forms part of the central protuberance. The polypeptide is Large ribosomal subunit protein bL25 (Caulobacter vibrioides (strain ATCC 19089 / CIP 103742 / CB 15) (Caulobacter crescentus)).